A 361-amino-acid chain; its full sequence is Peptide chain release factor 1 (361 aa).

At Q237 the chain carries N5-methylglutamine. Positions 286–306 (AKQDQEQAAKRKSLVGSGDRS) are disordered.

The protein belongs to the prokaryotic/mitochondrial release factor family. In terms of processing, methylated by PrmC. Methylation increases the termination efficiency of RF1.

The protein localises to the cytoplasm. Its function is as follows. Peptide chain release factor 1 directs the termination of translation in response to the peptide chain termination codons UAG and UAA. The sequence is that of Peptide chain release factor 1 from Coxiella burnetii (strain CbuK_Q154) (Coxiella burnetii (strain Q154)).